Reading from the N-terminus, the 500-residue chain is Probable cytosol aminopeptidase (500 aa).

Mn(2+) is bound by residues Lys268 and Asp273. Residue Lys280 is part of the active site. Mn(2+) is bound by residues Asp291, Asp350, and Glu352. The active site involves Arg354.

This sequence belongs to the peptidase M17 family. Requires Mn(2+) as cofactor.

The protein localises to the cytoplasm. The catalysed reaction is Release of an N-terminal amino acid, Xaa-|-Yaa-, in which Xaa is preferably Leu, but may be other amino acids including Pro although not Arg or Lys, and Yaa may be Pro. Amino acid amides and methyl esters are also readily hydrolyzed, but rates on arylamides are exceedingly low.. It catalyses the reaction Release of an N-terminal amino acid, preferentially leucine, but not glutamic or aspartic acids.. Functionally, presumably involved in the processing and regular turnover of intracellular proteins. Catalyzes the removal of unsubstituted N-terminal amino acids from various peptides. The chain is Probable cytosol aminopeptidase from Baumannia cicadellinicola subsp. Homalodisca coagulata.